The sequence spans 884 residues: Alanine--tRNA ligase (884 aa).

The Zn(2+) site is built by histidine 572, histidine 576, cysteine 673, and histidine 677.

It belongs to the class-II aminoacyl-tRNA synthetase family. Zn(2+) is required as a cofactor.

It localises to the cytoplasm. It carries out the reaction tRNA(Ala) + L-alanine + ATP = L-alanyl-tRNA(Ala) + AMP + diphosphate. Its function is as follows. Catalyzes the attachment of alanine to tRNA(Ala) in a two-step reaction: alanine is first activated by ATP to form Ala-AMP and then transferred to the acceptor end of tRNA(Ala). Also edits incorrectly charged Ser-tRNA(Ala) and Gly-tRNA(Ala) via its editing domain. This chain is Alanine--tRNA ligase, found in Xylella fastidiosa (strain M12).